The chain runs to 186 residues: Adenylate kinase (186 aa).

14 to 19 provides a ligand contact to ATP; it reads GAGKGT. Positions 34–63 are NMP; it reads STGDILRDHVARGTPLGERVRPIMERGDLV. AMP contacts are provided by residues Thr-35, Arg-40, 61-63, 84-87, and Gln-91; these read DLV and GFPR. Residues 125 to 135 form an LID region; that stretch reads RRAELEGRSDD. Position 126 (Arg-126) interacts with ATP. The AMP site is built by Arg-132 and Arg-143. An ATP-binding site is contributed by Gly-171.

It belongs to the adenylate kinase family. In terms of assembly, monomer.

Its subcellular location is the cytoplasm. It carries out the reaction AMP + ATP = 2 ADP. The protein operates within purine metabolism; AMP biosynthesis via salvage pathway; AMP from ADP: step 1/1. In terms of biological role, catalyzes the reversible transfer of the terminal phosphate group between ATP and AMP. Plays an important role in cellular energy homeostasis and in adenine nucleotide metabolism. The chain is Adenylate kinase from Thermus thermophilus (strain ATCC BAA-163 / DSM 7039 / HB27).